The sequence spans 226 residues: Pro-opiomelanocortin (226 aa).

The first 22 residues, 1-22, serve as a signal peptide directing secretion; sequence MVCAPWLLAVVVVCVCNPGVGG. The propeptide occupies 23-97; it reads QCWDSSHCKD…DPEPHSDKRH (75 aa). An N-acetylserine; in Corticotropin modification is found at Ser-98. The residue at position 198 (Tyr-198) is an N-acetyltyrosine; in Beta-endorphin and Met-enkephalin.

The protein belongs to the POMC family. Specific enzymatic cleavages at paired basic residues yield the different active peptides.

The protein resides in the secreted. Functionally, stimulates the adrenal glands to release cortisol. Its function is as follows. Anorexigenic peptide. Increases the pigmentation of skin by increasing melanin production in melanocytes. In terms of biological role, increases the pigmentation of skin by increasing melanin production in melanocytes. Endogenous orexigenic opiate. Functionally, endogenous opiate. The polypeptide is Pro-opiomelanocortin (pomc) (Oncorhynchus keta (Chum salmon)).